The primary structure comprises 312 residues: Protein phosphatase 2A catalytic subunit B (312 aa).

Mn(2+)-binding residues include D55, H57, D83, and N115. The active-site Proton donor is H116. Mn(2+) contacts are provided by H165 and H240.

The protein belongs to the PPP phosphatase family. PP-2A subfamily. In terms of assembly, component of the Sca1 complex composed of at least gefA, gefH, scaA, phr, and the protein phosphatase 2A subunits pppA and pho2B. Mn(2+) is required as a cofactor.

It is found in the cell membrane. The enzyme catalyses O-phospho-L-seryl-[protein] + H2O = L-seryl-[protein] + phosphate. It catalyses the reaction O-phospho-L-threonyl-[protein] + H2O = L-threonyl-[protein] + phosphate. Component of the Sca1 complex, a regulator of cell motility, chemotaxis and signal relay. The Sca1 complex is recruited to the plasma membrane in a chemoattractant- and F-actin-dependent manner and is enriched at the leading edge of chemotaxing cells where it regulates F-actin dynamics and signal relay by controlling the activation of rasC and the downstream target of rapamycin complex 2 (TORC2)-Akt/protein kinase B (PKB) pathway. This chain is Protein phosphatase 2A catalytic subunit B, found in Dictyostelium discoideum (Social amoeba).